Consider the following 98-residue polypeptide: Aspartyl/glutamyl-tRNA(Asn/Gln) amidotransferase subunit C (98 aa).

This sequence belongs to the GatC family. In terms of assembly, heterotrimer of A, B and C subunits.

It carries out the reaction L-glutamyl-tRNA(Gln) + L-glutamine + ATP + H2O = L-glutaminyl-tRNA(Gln) + L-glutamate + ADP + phosphate + H(+). The enzyme catalyses L-aspartyl-tRNA(Asn) + L-glutamine + ATP + H2O = L-asparaginyl-tRNA(Asn) + L-glutamate + ADP + phosphate + 2 H(+). Allows the formation of correctly charged Asn-tRNA(Asn) or Gln-tRNA(Gln) through the transamidation of misacylated Asp-tRNA(Asn) or Glu-tRNA(Gln) in organisms which lack either or both of asparaginyl-tRNA or glutaminyl-tRNA synthetases. The reaction takes place in the presence of glutamine and ATP through an activated phospho-Asp-tRNA(Asn) or phospho-Glu-tRNA(Gln). The polypeptide is Aspartyl/glutamyl-tRNA(Asn/Gln) amidotransferase subunit C (Bifidobacterium adolescentis (strain ATCC 15703 / DSM 20083 / NCTC 11814 / E194a)).